The following is a 242-amino-acid chain: DNA repair protein RecO (242 aa).

It belongs to the RecO family. As to quaternary structure, monomer.

Functionally, involved in DNA repair and RecF pathway recombination. The sequence is that of DNA repair protein RecO from Salmonella dublin (strain CT_02021853).